Consider the following 526-residue polypeptide: Secreted triacylglycerol lipase LIP4 (526 aa).

Residues 1-26 (MVRLSYVRFGVAWCIAIIIVSGFSNA) form the signal peptide. Asn-186 is a glycosylation site (N-linked (GlcNAc...) asparagine). The active-site Nucleophile is Ser-195. An N-linked (GlcNAc...) asparagine glycan is attached at Asn-228. Active-site residues include Asp-342 and His-376. N-linked (GlcNAc...) asparagine glycosylation is present at Asn-377. Positions 412-526 (TGPSASSSAG…TMPAPPLMER (115 aa)) are disordered. Low complexity-rich tracts occupy residues 413-423 (GPSASSSAGGP) and 430-457 (TGGHHTQSGSAHGGHSSEHAASSTHAPA). Asn-462 is a glycosylation site (N-linked (GlcNAc...) asparagine). The segment covering 480–490 (PSTGATSPAPS) has biased composition (low complexity). A compositionally biased stretch (pro residues) spans 516–526 (RTMPAPPLMER).

This sequence belongs to the AB hydrolase superfamily. Lipase family. Class Lip subfamily.

It is found in the secreted. It catalyses the reaction a triacylglycerol + H2O = a diacylglycerol + a fatty acid + H(+). The enzyme catalyses a monoacylglycerol + H2O = glycerol + a fatty acid + H(+). It carries out the reaction a diacylglycerol + H2O = a monoacylglycerol + a fatty acid + H(+). Functionally, secreted lipase that hydrolyzes acylglycerol lipids such as triacylglycerols and consequently releases free fatty acid. Can hydrolyze 4-nitrophenyl palmitate to release 4-nitrophenol and palmitoic acid. Due to an absence of fatty acid synthase genes in Malassezia species, secretory lipases are essential for the yeast to generate free fatty acids from degradation of sebum and assimilate them as lipid sources for growth. Plays important roles not only in lipid metabolism but also in the immune response of host cells and pathogenesis. In Malassezia furfur (Pityriasis versicolor infection agent), this protein is Secreted triacylglycerol lipase LIP4.